A 447-amino-acid chain; its full sequence is Tubulin alpha chain (447 aa).

Glutamine 11, glutamate 71, glycine 144, threonine 145, threonine 179, asparagine 206, and asparagine 228 together coordinate GTP. A Mg(2+)-binding site is contributed by glutamate 71. Residue glutamate 254 is part of the active site.

This sequence belongs to the tubulin family. In terms of assembly, dimer of alpha and beta chains. A typical microtubule is a hollow water-filled tube with an outer diameter of 25 nm and an inner diameter of 15 nM. Alpha-beta heterodimers associate head-to-tail to form protofilaments running lengthwise along the microtubule wall with the beta-tubulin subunit facing the microtubule plus end conferring a structural polarity. Microtubules usually have 13 protofilaments but different protofilament numbers can be found in some organisms and specialized cells. It depends on Mg(2+) as a cofactor.

The protein resides in the cytoplasm. It is found in the cytoskeleton. The catalysed reaction is GTP + H2O = GDP + phosphate + H(+). In terms of biological role, tubulin is the major constituent of microtubules, a cylinder consisting of laterally associated linear protofilaments composed of alpha- and beta-tubulin heterodimers. Microtubules grow by the addition of GTP-tubulin dimers to the microtubule end, where a stabilizing cap forms. Below the cap, tubulin dimers are in GDP-bound state, owing to GTPase activity of alpha-tubulin. This chain is Tubulin alpha chain (TUBA), found in Avena sativa (Oat).